Reading from the N-terminus, the 41-residue chain is Photosystem II reaction center protein J (41 aa).

Residues 9–29 form a helical membrane-spanning segment; sequence IPLWFVGMVGGLAALGLLAIF.

Belongs to the PsbJ family. As to quaternary structure, PSII is composed of 1 copy each of membrane proteins PsbA, PsbB, PsbC, PsbD, PsbE, PsbF, PsbH, PsbI, PsbJ, PsbK, PsbL, PsbM, PsbT, PsbX, PsbY, PsbZ, Psb30/Ycf12, at least 3 peripheral proteins of the oxygen-evolving complex and a large number of cofactors. It forms dimeric complexes.

It is found in the plastid. Its subcellular location is the chloroplast thylakoid membrane. One of the components of the core complex of photosystem II (PSII). PSII is a light-driven water:plastoquinone oxidoreductase that uses light energy to abstract electrons from H(2)O, generating O(2) and a proton gradient subsequently used for ATP formation. It consists of a core antenna complex that captures photons, and an electron transfer chain that converts photonic excitation into a charge separation. The protein is Photosystem II reaction center protein J of Ostreococcus tauri.